A 269-amino-acid polypeptide reads, in one-letter code: Bis(5'-nucleosyl)-tetraphosphatase, symmetrical (269 aa).

Belongs to the Ap4A hydrolase family.

It carries out the reaction P(1),P(4)-bis(5'-adenosyl) tetraphosphate + H2O = 2 ADP + 2 H(+). Its function is as follows. Hydrolyzes diadenosine 5',5'''-P1,P4-tetraphosphate to yield ADP. In Vibrio cholerae serotype O1 (strain ATCC 39541 / Classical Ogawa 395 / O395), this protein is Bis(5'-nucleosyl)-tetraphosphatase, symmetrical.